Reading from the N-terminus, the 219-residue chain is tRNA (guanine-N(7)-)-methyltransferase (219 aa).

4 residues coordinate S-adenosyl-L-methionine: glutamate 43, aspartate 68, glutamate 101, and asparagine 124. Substrate contacts are provided by lysine 128 and aspartate 160.

Belongs to the class I-like SAM-binding methyltransferase superfamily. TrmB family.

The enzyme catalyses guanosine(46) in tRNA + S-adenosyl-L-methionine = N(7)-methylguanosine(46) in tRNA + S-adenosyl-L-homocysteine. It participates in tRNA modification; N(7)-methylguanine-tRNA biosynthesis. Catalyzes the formation of N(7)-methylguanine at position 46 (m7G46) in tRNA. The sequence is that of tRNA (guanine-N(7)-)-methyltransferase from Clostridium beijerinckii (strain ATCC 51743 / NCIMB 8052) (Clostridium acetobutylicum).